The following is a 599-amino-acid chain: NADH-quinone oxidoreductase subunit C/D (599 aa).

The tract at residues Met1–Glu190 is NADH dehydrogenase I subunit C. Positions Asp214 to Arg599 are NADH dehydrogenase I subunit D.

It in the N-terminal section; belongs to the complex I 30 kDa subunit family. The protein in the C-terminal section; belongs to the complex I 49 kDa subunit family. NDH-1 is composed of 13 different subunits. Subunits NuoB, CD, E, F, and G constitute the peripheral sector of the complex.

It is found in the cell inner membrane. It catalyses the reaction a quinone + NADH + 5 H(+)(in) = a quinol + NAD(+) + 4 H(+)(out). In terms of biological role, NDH-1 shuttles electrons from NADH, via FMN and iron-sulfur (Fe-S) centers, to quinones in the respiratory chain. The immediate electron acceptor for the enzyme in this species is believed to be ubiquinone. Couples the redox reaction to proton translocation (for every two electrons transferred, four hydrogen ions are translocated across the cytoplasmic membrane), and thus conserves the redox energy in a proton gradient. This is NADH-quinone oxidoreductase subunit C/D from Photorhabdus laumondii subsp. laumondii (strain DSM 15139 / CIP 105565 / TT01) (Photorhabdus luminescens subsp. laumondii).